The primary structure comprises 219 residues: uncharacterized protein (219 aa).

5 helical membrane passes run 14-34 (LVYSFPIVMAYIPVAFTFGVL), 37-57 (TLGFSEVEAMLASLLIFAGAS), 123-143 (FLLGLELGSYSAWVGGTALGV), 155-175 (VYSALVFSISALFLVLLLPNL), and 189-209 (VALAFHLLNLTSVGIIAAALA).

It belongs to the AzlC family.

It localises to the cell membrane. This is an uncharacterized protein from Archaeoglobus fulgidus (strain ATCC 49558 / DSM 4304 / JCM 9628 / NBRC 100126 / VC-16).